A 390-amino-acid chain; its full sequence is Zinc transporter 8 (390 aa).

Residues 1 to 25 (MRTNTTATVLLAAAVALLLATAARG) form the signal peptide. Asn4 carries N-linked (GlcNAc...) asparagine glycosylation. The Extracellular portion of the chain corresponds to 26–50 (DGGDGGCGKEDAAAGRDRARARGLK). Residues 51–71 (IAAFFSILVCGALGCGLPSLG) form a helical membrane-spanning segment. The Cytoplasmic portion of the chain corresponds to 72 to 82 (RHVPALRPDGD). The helical transmembrane segment at 83–103 (VFFLVKAFAAGVILATGFIHI) threads the bilayer. Topologically, residues 104 to 124 (LPDAFDNLTDDCLPAGGPWKE) are extracellular. A glycan (N-linked (GlcNAc...) asparagine) is linked at Asn110. A helical membrane pass occupies residues 125 to 145 (FPFAGFGAMVGAIGTLVVDTL). Topologically, residues 146–235 (ATGYFTRALS…DDKETTLRHR (90 aa)) are cytoplasmic. The interval 165-199 (VADEEKQSAAATQQHNHHHNHHVVGDGGGGGEEHE) is disordered. Residues 236 to 256 (VISQVLELGIVVHSVIIGISL) form a helical membrane-spanning segment. Over 257–267 (GASQNPETIKP) the chain is Extracellular. A helical membrane pass occupies residues 268–288 (LVVALSFHQMFEGMGLGGCIV). Over 289–296 (QAKFKVRS) the chain is Cytoplasmic. Residues 297–317 (IVTMVLFFCLTTPVGIAVGVG) traverse the membrane as a helical segment. At 318–329 (ISSVYNESSPTA) the chain is on the extracellular side. Asn323 is a glycosylation site (N-linked (GlcNAc...) asparagine). Residues 330–350 (LVVEGILNSVAAGILIYMALV) form a helical membrane-spanning segment. The Cytoplasmic portion of the chain corresponds to 351 to 369 (DLLAEDFMNPRVQSKGKLQ). Residues 370–390 (LGINLAMLAGAGLMSMLAKWA) traverse the membrane as a helical segment.

The protein belongs to the ZIP transporter (TC 2.A.5) family.

The protein localises to the cell membrane. Functionally, zinc transporter that may mediate zinc uptake from the rhizosphere and may be responsible for the translocation of zinc within the plant. The sequence is that of Zinc transporter 8 (ZIP8) from Oryza sativa subsp. japonica (Rice).